The chain runs to 387 residues: Palmitoyltransferase ZDHHC16A (387 aa).

The next 2 membrane-spanning stretches (helical) occupy residues 73–93 (WFGM…VFIA) and 106–126 (SPGW…MIVF). Residues 150–200 (SVCKKCIIPKPARSHHCGICKTCILKMDHHCPWLNNCVGHFNHRYFFSFCL) enclose the DHHC domain. Cys180 (S-palmitoyl cysteine intermediate) is an active-site residue. 3 helical membrane-spanning segments follow: residues 198–218 (FCLF…HLFI), 236–256 (GVPV…GVAG), and 281–301 (VIYM…LTLW).

This sequence belongs to the DHHC palmitoyltransferase family. Expressed in the central nervous system (CNS). Expressed in the developing forebrain, and especially in the telencephalon.

It is found in the endoplasmic reticulum membrane. The catalysed reaction is L-cysteinyl-[protein] + hexadecanoyl-CoA = S-hexadecanoyl-L-cysteinyl-[protein] + CoA. In terms of biological role, palmitoyl acyltransferase that mediates palmitoylation of proteins and is required during embryonic heart development. Involved in the proliferation of neural stem cells by regulating the FGF/ERK pathway. Involved in the proliferation of neural stem cells by regulating the FGF/ERK pathway. The chain is Palmitoyltransferase ZDHHC16A from Danio rerio (Zebrafish).